The chain runs to 191 residues: CASP-like protein 4C2 (191 aa).

Over 1–29 (MEAADSATNNSKDTHFYGKSRAENRRRSD) the chain is Cytoplasmic. Residues 30 to 50 (AMLLLFRALTFSFSLAAVVVM) form a helical membrane-spanning segment. Over 51–72 (GTNRYRINPQLKVSWYDFEPYR) the chain is Extracellular. Residues 73–93 (YVLAVNAIICIYSFVETWLAV) form a helical membrane-spanning segment. The Cytoplasmic segment spans residues 94 to 116 (YTYLQGSYLLPEIFQVWFDYGHD). Residues 117 to 137 (QGFAYLLFSANSAGVAMAQLL) traverse the membrane as a helical segment. Over 138–161 (QSGNTLIHGAYHCTEAGGYCTQAR) the chain is Extracellular. Residues 162-182 (VSIALGFVAFLFLALSSLLTG) form a helical membrane-spanning segment. Residues 183 to 191 (LRVARWYLR) are Cytoplasmic-facing.

It belongs to the Casparian strip membrane proteins (CASP) family. In terms of assembly, homodimer and heterodimers.

It localises to the cell membrane. The sequence is that of CASP-like protein 4C2 from Physcomitrium patens (Spreading-leaved earth moss).